We begin with the raw amino-acid sequence, 60 residues long: Large ribosomal subunit protein uL30 (60 aa).

The protein belongs to the universal ribosomal protein uL30 family. In terms of assembly, part of the 50S ribosomal subunit.

This Streptococcus uberis (strain ATCC BAA-854 / 0140J) protein is Large ribosomal subunit protein uL30.